Consider the following 289-residue polypeptide: Tumor necrosis factor receptor superfamily member 5 (289 aa).

An N-terminal signal peptide occupies residues 1–19 (MVSLPRLCALWGCLLTAVH). Residues 20–193 (LGQCVTCSDK…VICGLKSRMR (174 aa)) lie on the Extracellular side of the membrane. TNFR-Cys repeat units follow at residues 25–60 (TCSDKQYLHDGQCCDLCQPGSRLTSHCTALEKTQCH), 61–103 (PCDS…DTVC), 104–144 (TCKE…TVCH), and 145–187 (PCPV…VICG). 8 disulfide bridges follow: Cys26–Cys37, Cys38–Cys51, Cys41–Cys59, Cys62–Cys77, Cys83–Cys103, Cys105–Cys119, Cys111–Cys116, and Cys125–Cys143. N-linked (GlcNAc...) asparagine glycosylation occurs at Asn153. The helical transmembrane segment at 194–215 (ALLVIPVVMGILITIFGVFLYI) threads the bilayer. Residues 216–289 (KKVVKKPKDN…TDSIALRPLV (74 aa)) lie on the Cytoplasmic side of the membrane. The disordered stretch occupies residues 228–251 (LPPAARRQDPQEMEDYPGHNTAAP).

As to quaternary structure, monomer and homodimer. Interacts with TRAF1, TRAF2 and TRAF6. Interacts with TRAF3 and TRAF5. Interacts with TRAF6 and MAP3K8; the interaction is required for ERK activation.

It is found in the cell membrane. Its subcellular location is the secreted. Its function is as follows. Receptor for TNFSF5/CD40LG. Transduces TRAF6- and MAP3K8-mediated signals that activate ERK in macrophages and B cells, leading to induction of immunoglobulin secretion. This chain is Tumor necrosis factor receptor superfamily member 5 (Cd40), found in Mus musculus (Mouse).